A 499-amino-acid polypeptide reads, in one-letter code: Trichoplein keratin filament-binding protein (499 aa).

A coiled-coil region spans residues 12 to 38; it reads SRVRTLEQQLVRQREQEARLRRQWEQH. Disordered stretches follow at residues 46-78 and 169-209; these read DVRSSKQAQWSSRQSFHRSMSAFQRDRMREEKQ and VQQQ…EEEN. Over residues 50–67 the composition is skewed to polar residues; the sequence is SKQAQWSSRQSFHRSMSA. Composition is skewed to basic and acidic residues over residues 69–78 and 172–209; these read QRDRMREEKQ and QEKKQADERTQEEKQRFENEYERTRQEALERMRKEEEN. 3 coiled-coil regions span residues 71–133, 168–306, and 359–484; these read DRMR…ERRK, QVQQ…ALLE, and WEKR…MIRQ. Residues 74–499 form an interaction with keratin proteins region; the sequence is REEKQRKLEE…IHSRPRSAWT (426 aa). Residues 260-426 are trichohyalin/plectin homology domain; it reads KMMEESRRKT…RLTLRLEKEQ (167 aa).

This sequence belongs to the TCHP family.

Its subcellular location is the cytoplasm. The protein resides in the cytoskeleton. It is found in the microtubule organizing center. The protein localises to the centrosome. Its function is as follows. May act as a 'capping' or 'branching' protein for keratin filaments in the cell periphery. May regulate K8/K18 filament and desmosome organization mainly at the apical or peripheral regions of simple epithelial cells. This chain is Trichoplein keratin filament-binding protein, found in Danio rerio (Zebrafish).